The primary structure comprises 309 residues: Aromatic prenyltransferase (309 aa).

The protein belongs to the aromatic prenyltransferase family.

In terms of biological role, prenyltransferase that attaches isoprenoid moieties to carbon atoms of aromatic substrates in an enzyme-catalyzed Friedel-Crafts reaction. Shows specificity for dimethylallyl diphosphate (DMAPP) and does not accept geranyl diphosphate (GPP) or isopentenyl diphosphate (IPP). Prenylates the artificial substrate 2,7-dihydroxynaphthalene (2,7-DHN), as well as dihydrophenazine-1-carboxylic acid and 4-hydroxybenzoic acid at lower levels. Only traces of products are detected with aspulvinone E or flaviolin as substrates; and no product is formed with L-tryptophan, L-tyrosine, or 4-hydroxyphenylpyruvate. Ptf seems no to be involved in the prenylation reaction in the biosynthesis of aspulvinone H and J and the physiological function of ptf remains unknown. The polypeptide is Aromatic prenyltransferase (Botryotinia fuckeliana (strain B05.10) (Noble rot fungus)).